The chain runs to 190 residues: UPF0725 protein At2g20625 (190 aa).

It belongs to the UPF0725 (EMB2204) family.

This Arabidopsis thaliana (Mouse-ear cress) protein is UPF0725 protein At2g20625.